The following is a 452-amino-acid chain: tRNA modification GTPase MnmE (452 aa).

3 residues coordinate (6S)-5-formyl-5,6,7,8-tetrahydrofolate: Arg21, Glu82, and Arg121. The region spanning Gly214–Leu372 is the TrmE-type G domain. Residue Asn224 participates in K(+) binding. Residues Asn224–Ser229, Thr243–Thr249, Asp268–Gly271, and Ser353–Arg355 each bind GTP. Position 228 (Ser228) interacts with Mg(2+). Residues Thr243, Ile245, and Thr248 each coordinate K(+). Mg(2+) is bound at residue Thr249. Lys452 serves as a coordination point for (6S)-5-formyl-5,6,7,8-tetrahydrofolate.

It belongs to the TRAFAC class TrmE-Era-EngA-EngB-Septin-like GTPase superfamily. TrmE GTPase family. In terms of assembly, homodimer. Heterotetramer of two MnmE and two MnmG subunits. K(+) serves as cofactor.

It is found in the cytoplasm. Exhibits a very high intrinsic GTPase hydrolysis rate. Involved in the addition of a carboxymethylaminomethyl (cmnm) group at the wobble position (U34) of certain tRNAs, forming tRNA-cmnm(5)s(2)U34. In Chloroflexus aurantiacus (strain ATCC 29366 / DSM 635 / J-10-fl), this protein is tRNA modification GTPase MnmE.